The sequence spans 246 residues: Phosphomannomutase 2 (246 aa).

Alanine 2 carries the post-translational modification N-acetylalanine. Aspartate 12 acts as the Nucleophile in catalysis. Aspartate 12 and aspartate 14 together coordinate Mg(2+). The active-site Proton donor/acceptor is the aspartate 14. Positions 21, 123, 134, and 141 each coordinate alpha-D-mannose 1-phosphate. Lysine 149 bears the N6-acetyllysine mark. The alpha-D-mannose 1-phosphate site is built by serine 179 and aspartate 181. Mg(2+) is bound by residues aspartate 209, phenylalanine 221, aspartate 223, and threonine 226.

The protein belongs to the eukaryotic PMM family. In terms of assembly, homodimer.

The protein resides in the cytoplasm. It carries out the reaction alpha-D-mannose 1-phosphate = D-mannose 6-phosphate. Its pathway is nucleotide-sugar biosynthesis; GDP-alpha-D-mannose biosynthesis; alpha-D-mannose 1-phosphate from D-fructose 6-phosphate: step 2/2. Its function is as follows. Involved in the synthesis of the GDP-mannose and dolichol-phosphate-mannose required for a number of critical mannosyl transfer reactions. This is Phosphomannomutase 2 (PMM2) from Macaca fascicularis (Crab-eating macaque).